A 466-amino-acid polypeptide reads, in one-letter code: Phytase A (466 aa).

Residues 1–19 (MGVFVVLLSIATLFGSTSG) form the signal peptide. An N-linked (GlcNAc...) asparagine glycan is attached at N27. An intrachain disulfide couples C31 to C40. Y51, R81, H82, R85, and T88 together coordinate 1D-myo-inositol hexakisphosphate. Cystine bridges form between C71/C414, C215/C465, C264/C282, and C436/C444. The active-site Nucleophile is the H82. N-linked (GlcNAc...) asparagine glycosylation is found at N105 and N120. R165 serves as a coordination point for 1D-myo-inositol hexakisphosphate. N-linked (GlcNAc...) asparagine glycosylation is found at N207 and N230. K301 is a 1D-myo-inositol hexakisphosphate binding site. N-linked (GlcNAc...) asparagine glycans are attached at residues N339 and N352. 1D-myo-inositol hexakisphosphate-binding residues include H361 and D362. The N-linked (GlcNAc...) asparagine glycan is linked to N376.

It belongs to the histidine acid phosphatase family. In terms of assembly, monomer.

It is found in the secreted. It carries out the reaction 1D-myo-inositol hexakisphosphate + H2O = 1D-myo-inositol 1,2,4,5,6-pentakisphosphate + phosphate. The enzyme catalyses 1D-myo-inositol 1,2,4,5,6-pentakisphosphate + H2O = 1D-myo-inositol 1,2,5,6-tetrakisphosphate + phosphate. It catalyses the reaction 1D-myo-inositol 1,2,5,6-tetrakisphosphate + H2O = 1D-myo-inositol 1,2,6-trisphosphate + phosphate. The catalysed reaction is 1D-myo-inositol 1,2,6-trisphosphate + H2O = 1D-myo-inositol 1,2-bisphosphate + phosphate. It carries out the reaction 1D-myo-inositol 1,2-bisphosphate + H2O = 1D-myo-inositol 2-phosphate + phosphate. Catalyzes the phosphate monoester hydrolysis of phytic acid (myo-inositol hexakisphosphate), which results in the stepwise formation of myo-inositol pentakis-, tetrakis-, tris-, bis-, and monophosphates, as well as the liberation of inorganic phosphate. Myo-inositol 2-monophosphate is the end product. Has a broad substrate specificity and is also able to dephosphorylate other classic acid phosphatase substrates such as p-nitrophenyl phosphate, phenyl phosphate, fructose 1,6-bisphosphate, glucose 6-phosphate, 3-phosphoglycerate, as well as ADP and ATP. This Aspergillus terreus protein is Phytase A.